The following is a 47-amino-acid chain: Wound-induced basic protein (47 aa).

The segment at methionine 1–glutamate 47 is disordered. Positions serine 20 to glutamate 40 are enriched in basic and acidic residues.

Abundant in radicals and epicotyls of seedlings and higher in the roots than in stems and leaves of mature plants.

The chain is Wound-induced basic protein (PR4) from Phaseolus vulgaris (Kidney bean).